The sequence spans 262 residues: Putative ABC transporter ATP-binding protein SAV_3608 (262 aa).

The 231-residue stretch at 18–248 (LDVAGLAFAY…DTLMRAHRLE (231 aa)) folds into the ABC transporter domain. Residue 51-58 (GPNGAGKT) coordinates ATP.

This sequence belongs to the ABC transporter superfamily.

The protein localises to the cell membrane. Its function is as follows. Probably part of an ABC transporter complex. Responsible for energy coupling to the transport system. The protein is Putative ABC transporter ATP-binding protein SAV_3608 of Streptomyces avermitilis (strain ATCC 31267 / DSM 46492 / JCM 5070 / NBRC 14893 / NCIMB 12804 / NRRL 8165 / MA-4680).